Consider the following 273-residue polypeptide: Kit ligand (273 aa).

Positions 1–25 (MKKTQTWIITCIYLQLLLFNPLVKT) are cleaved as a signal peptide. Over 26–214 (KEICGNPVTD…AKAPEDSGLQ (189 aa)) the chain is Extracellular. 2 disulfides stabilise this stretch: C29–C114 and C68–C163. Residues N90, N97, N145, and N195 are each glycosylated (N-linked (GlcNAc...) asparagine). The interval 190-210 (ASSLRNDSSSSNRKAAKAPED) is disordered. A compositionally biased stretch (low complexity) spans 191-202 (SSLRNDSSSSNR). The helical transmembrane segment at 215-237 (WTAMALPALISLVIGFAFGALYW) threads the bilayer. Topologically, residues 238-273 (KKKQSSLTRAVENIQINEEDNEISMLQQKEREFQEV) are cytoplasmic.

This sequence belongs to the SCF family. Homodimer, non-covalently linked. Heterotetramer with KIT, binding two KIT molecules; thereby mediates KIT dimerization and subsequent activation by autophosphorylation. A soluble form is produced by proteolytic processing of isoform 1 in the extracellular domain. Expressed in the cochlea.

It localises to the cell membrane. Its subcellular location is the cytoplasm. The protein resides in the cytoskeleton. It is found in the cell projection. The protein localises to the lamellipodium. It localises to the filopodium. Its subcellular location is the secreted. Ligand for the receptor-type protein-tyrosine kinase KIT. Plays an essential role in the regulation of cell survival and proliferation, hematopoiesis, stem cell maintenance, gametogenesis, mast cell development, migration and function, and in melanogenesis. KITLG/SCF binding can activate several signaling pathways. Promotes phosphorylation of PIK3R1, the regulatory subunit of phosphatidylinositol 3-kinase, and subsequent activation of the kinase AKT1. KITLG/SCF and KIT also transmit signals via GRB2 and activation of RAS, RAF1 and the MAP kinases MAPK1/ERK2 and/or MAPK3/ERK1. KITLG/SCF and KIT promote activation of STAT family members STAT1, STAT3 and STAT5. KITLG/SCF and KIT promote activation of PLCG1, leading to the production of the cellular signaling molecules diacylglycerol and inositol 1,4,5-trisphosphate. KITLG/SCF acts synergistically with other cytokines, probably interleukins. The chain is Kit ligand (Kitlg) from Mus musculus (Mouse).